The primary structure comprises 1283 residues: uncharacterized protein (1283 aa).

In terms of domain architecture, LDL-receptor class A spans Ala10–Thr46. Cystine bridges form between Cys11/Cys23 and Cys18/Cys36. Positions Asp27–Gly47 are disordered. A compositionally biased stretch (acidic residues) spans Lys34–Val45. A glycan (N-linked (GlcNAc...) asparagine) is linked at Asn79. The tract at residues Ser236–Val278 is disordered. The span at Thr261–Thr272 shows a compositional bias: low complexity. Residues Tyr332–Leu389 are a coiled coil. Disordered stretches follow at residues Ala621–Ser651 and Ser1005–Gly1046. Residues Val626–Pro647 are compositionally biased toward pro residues. Residues Ser1005–Glu1015 are compositionally biased toward low complexity. Positions Ser1016–Thr1026 are enriched in acidic residues. A compositionally biased stretch (low complexity) spans Glu1027–Thr1044. The helical transmembrane segment at Val1263–Phe1283 threads the bilayer.

The protein resides in the membrane. This is an uncharacterized protein from Caenorhabditis elegans.